The following is a 192-amino-acid chain: MSEYLLLLISTVLVNNFVLVKFLGLCPFMGVSSKLESAIGMSMATTFVLTLASVLSYLVNQYLLLPFELGYLRTMSFILVIAVVVQFTEMLVQKTSASLYRALGIYLPLITTNCAVLGVALLNISEKHNFIESAIYGFGAAVGFSLVLILFSAMRERLAAADVPLPFRGGAIAMITAGLMSLAFMGFTGLVK.

The next 6 membrane-spanning stretches (helical) occupy residues Leu5–Leu25, Ile39–Val59, Leu65–Val85, Ala102–Leu122, Ala134–Met154, and Ala171–Val191.

It belongs to the NqrDE/RnfAE family. The complex is composed of six subunits: RnfA, RnfB, RnfC, RnfD, RnfE and RnfG.

It localises to the cell inner membrane. Part of a membrane-bound complex that couples electron transfer with translocation of ions across the membrane. This is Ion-translocating oxidoreductase complex subunit A from Shewanella sediminis (strain HAW-EB3).